Here is a 231-residue protein sequence, read N- to C-terminus: Class II histocompatibility antigen, B-L beta chain (231 aa).

The interval 1–89 is beta-1; it reads FFQWSATVEC…IVAPLTLQRR (89 aa). At 1–194 the chain is on the extracellular side; the sequence is FFQWSATVEC…PGDVSRSKLL (194 aa). Disulfide bonds link Cys10/Cys74 and Cys111/Cys167. An N-linked (GlcNAc...) asparagine glycan is attached at Asn14. The beta-2 stretch occupies residues 90–182; that stretch reads EPKVRIFALQ…SLQQPITQRW (93 aa). The Ig-like C1-type domain maps to 91-179; that stretch reads PKVRIFALQS…EHTSLQQPIT (89 aa). The segment at 183 to 194 is connecting peptide; sequence EPPGDVSRSKLL. Residues 195 to 219 traverse the membrane as a helical segment; it reads MGVGGFVLGLVYLALGIFFFLCSKK. The Cytoplasmic portion of the chain corresponds to 220–231; it reads GQPDPTSPGILN.

The protein belongs to the MHC class II family.

It is found in the membrane. The polypeptide is Class II histocompatibility antigen, B-L beta chain (Gallus gallus (Chicken)).